The sequence spans 161 residues: Globin CTT-VIIB-3 (161 aa).

An N-terminal signal peptide occupies residues 1–16 (MKFFAVLALCIVGAIA). One can recognise a Globin domain in the interval 18–161 (PLTADEASLV…NTYAIVVPRL (144 aa)). Heme b is bound by residues H76 and H111.

It belongs to the globin family. In terms of assembly, homodimer.

This is Globin CTT-VIIB-3 (CTT-7B3) from Chironomus thummi thummi (Midge).